The chain runs to 151 residues: uncharacterized protein (151 aa).

3 helical membrane passes run 12-32 (LAYF…LFII), 59-79 (LAFL…YGLL), and 114-134 (YFAY…IAFG).

It is found in the cell membrane. This is an uncharacterized protein from Bacillus subtilis (strain 168).